The sequence spans 360 residues: UDP-N-acetylglucosamine--N-acetylmuramyl-(pentapeptide) pyrophosphoryl-undecaprenol N-acetylglucosamine transferase (360 aa).

2 residues coordinate UDP-N-acetyl-alpha-D-glucosamine: Ser-198 and Gln-289.

The protein belongs to the glycosyltransferase 28 family. MurG subfamily.

It is found in the cell membrane. It catalyses the reaction Mur2Ac(oyl-L-Ala-gamma-D-Glu-L-Lys-D-Ala-D-Ala)-di-trans,octa-cis-undecaprenyl diphosphate + UDP-N-acetyl-alpha-D-glucosamine = beta-D-GlcNAc-(1-&gt;4)-Mur2Ac(oyl-L-Ala-gamma-D-Glu-L-Lys-D-Ala-D-Ala)-di-trans,octa-cis-undecaprenyl diphosphate + UDP + H(+). Its pathway is cell wall biogenesis; peptidoglycan biosynthesis. Cell wall formation. Catalyzes the transfer of a GlcNAc subunit on undecaprenyl-pyrophosphoryl-MurNAc-pentapeptide (lipid intermediate I) to form undecaprenyl-pyrophosphoryl-MurNAc-(pentapeptide)GlcNAc (lipid intermediate II). This chain is UDP-N-acetylglucosamine--N-acetylmuramyl-(pentapeptide) pyrophosphoryl-undecaprenol N-acetylglucosamine transferase, found in Streptococcus pyogenes serotype M3 (strain SSI-1).